A 302-amino-acid chain; its full sequence is Oxygen-dependent coproporphyrinogen-III oxidase (302 aa).

A substrate-binding site is contributed by S94. Positions 98 and 108 each coordinate a divalent metal cation. Residue H108 is the Proton donor of the active site. 110 to 112 contributes to the substrate binding site; that stretch reads NVR. Positions 147 and 177 each coordinate a divalent metal cation. The interval 242-277 is important for dimerization; the sequence is YVEFNLVYDRGTLFGLQTGGRTESILMSMPPLARWE. Residue 260–262 coordinates substrate; it reads GGR.

This sequence belongs to the aerobic coproporphyrinogen-III oxidase family. In terms of assembly, homodimer. It depends on a divalent metal cation as a cofactor.

The protein localises to the cytoplasm. It catalyses the reaction coproporphyrinogen III + O2 + 2 H(+) = protoporphyrinogen IX + 2 CO2 + 2 H2O. The protein operates within porphyrin-containing compound metabolism; protoporphyrin-IX biosynthesis; protoporphyrinogen-IX from coproporphyrinogen-III (O2 route): step 1/1. Functionally, involved in the heme biosynthesis. Catalyzes the aerobic oxidative decarboxylation of propionate groups of rings A and B of coproporphyrinogen-III to yield the vinyl groups in protoporphyrinogen-IX. This chain is Oxygen-dependent coproporphyrinogen-III oxidase, found in Aeromonas salmonicida (strain A449).